Reading from the N-terminus, the 399-residue chain is Ras-related GTP-binding protein C (399 aa).

A disordered region spans residues 1–20 (MSLQYGAEETPLAGSYGAAD). Serine 2 is subject to N-acetylserine. 2 positions are modified to phosphoserine: serine 2 and serine 15. Residues arginine 71, serine 72, glycine 73, lysine 74, serine 75, serine 76, threonine 90, glutamate 94, threonine 96, histidine 178, lysine 179, aspartate 181, serine 219, and isoleucine 220 each coordinate GDP. Residue lysine 74 coordinates GTP. Threonine 90 lines the GTP pocket. Threonine 96 serves as a coordination point for GTP. Threonine 96 carries the post-translational modification Phosphothreonine. Aspartate 181 is a GTP binding site.

It belongs to the GTR/RAG GTP-binding protein family. As to quaternary structure, forms a heterodimer with RRAGA, in a sequence-independent manner, and RRAGB. Heterodimerization stabilizes proteins of the heterodimer. The GDP-bound form of RRAGC (in complex with the GTP-bound form of RRAGA or RRAGB), interacts with RPTOR, thereby promoting recruitment of mTORC1 to the lysosomes. Component of the lysosomal folliculin complex (LFC), composed of FLCN, FNIP1 (or FNIP2), RagA/RRAGA or RagB/RRAGB GDP-bound, RagC/RRAGC or RagD/RRAGD GTP-bound, and Ragulator. Interacts with NOL8. Interacts with SH3BP4; the interaction with this negative regulator is most probably direct, preferentially occurs with the inactive GDP-bound form of RRAGB, is negatively regulated by amino acids and prevents interaction with RPTOR. The Rag heterodimer interacts with SLC38A9; the probable amino acid sensor. Interacts with SESN1, SESN2 and SESN3. Interacts with PIP4P1. The Rag heterodimer interacts with the Ragulator complex. The GDP-bound form interacts with TFEB. The GDP-bound form interacts with TFE3.

The protein resides in the cytoplasm. The protein localises to the nucleus. It localises to the lysosome membrane. It catalyses the reaction GTP + H2O = GDP + phosphate + H(+). With respect to regulation, the activation of RagC/RRAGC is mediated by a GTPase activating protein (GAP). In high-amino acid conditions, activated by GTPase activating protein FLCN that stimulates RRAGC GTPase activity to turn it into its active GDP-bound form. In response to amino acid depletion, the GATOR1 complex inactivates RagC/RRAGC by securing the GTP-bound inactive form. Functionally, guanine nucleotide-binding protein that plays a crucial role in the cellular response to amino acid availability through regulation of the mTORC1 signaling cascade. Forms heterodimeric Rag complexes with RagA/RRAGA or RagB/RRAGB and cycles between an inactive GTP-bound and an active GDP-bound form: RagC/RRAGC is in its active form when GDP-bound RagC/RRAGC forms a complex with GTP-bound RagA/RRAGA (or RagB/RRAGB) and in an inactive form when GTP-bound RagC/RRAGC heterodimerizes with GDP-bound RagA/RRAGA (or RagB/RRAGB). In its GDP-bound active form, promotes the recruitment of mTORC1 to the lysosomes and its subsequent activation by the GTPase RHEB. This is a crucial step in the activation of the MTOR signaling cascade by amino acids. Also plays a central role in the non-canonical mTORC1 complex, which acts independently of RHEB and specifically mediates phosphorylation of MiT/TFE factors TFEB and TFE3: GDP-bound RagC/RRAGC mediates recruitment of MiT/TFE factors TFEB and TFE3. The polypeptide is Ras-related GTP-binding protein C (Homo sapiens (Human)).